The primary structure comprises 377 residues: Circumsporozoite protein (377 aa).

An N-terminal signal peptide occupies residues 1–22; the sequence is MKNFILLAVSSILLVDLFPTHC. Positions 51-294 are disordered; sequence HVGQSASRGR…NNEGANAPNE (244 aa). Residues 72–100 show a composition bias toward basic and acidic residues; the sequence is DAKKKKDGKKAEPKNPRENKLKQPGDRAD. Residues 80–88 are required for the binding to heparan sulfate proteoglycans (HSPGs) on the surface of host hepatocytes; that stretch reads KKAEPKNPR. The interval 91–95 is region I; contains the proteolytic cleavage site; sequence KLKQP. A run of 20 repeats spans residues 95 to 103, 104 to 112, 113 to 121, 122 to 130, 131 to 139, 140 to 148, 149 to 157, 158 to 166, 167 to 175, 176 to 184, 185 to 193, 194 to 202, 203 to 211, 212 to 220, 221 to 229, 230 to 238, 239 to 247, 248 to 256, 257 to 265, and 266 to 274. The interval 95 to 274 is 20 X 9 AA tandem repeats of [PA]-G-D-R-A-[DA]-G-Q-[PA]; it reads PGDRADGQPA…AAGDRAAGQA (180 aa). Residues 236-273 show a composition bias toward low complexity; sequence GQPAGDRAAGQPAGDRAAGQPAGDRAAGQAAGDRAAGQ. Residues 274–283 are compositionally biased toward gly residues; it reads AAGGNAGGQG. Residues 284–293 show a composition bias toward low complexity; it reads QNNEGANAPN. The region spanning 303 to 355 is the TSP type-1 domain; it reads KVRATVGTEWTPCSVTCGVGVRVRRRVNAANKKPEDLTLNDLETDVCTMDKCA. 2 disulfide bridges follow: cysteine 315-cysteine 349 and cysteine 319-cysteine 354. An O-linked (Fuc) threonine glycan is attached at threonine 318. Cysteine 354 carries GPI-anchor amidated cysteine lipidation. The propeptide at 355 to 377 is removed in mature form; it reads AGIFNVVSNSLGLVILLVLALFN.

It belongs to the plasmodium circumsporozoite protein family. During host cell invasion, proteolytically cleaved at the cell membrane in the region I by a papain-like cysteine protease of parasite origin. Cleavage is triggered by the sporozoite contact with highly sulfated heparan sulfate proteoglycans (HSPGs) present on the host hepatocyte cell surface. Cleavage exposes the TSP type-1 (TSR) domain and is required for productive invasion of host hepatocytes but not for adhesion to the host cell membrane. Cleavage is dispensable for sporozoite development in the oocyst, motility and for traversal of host and vector cells. Post-translationally, O-glycosylated; maybe by POFUT2.

Its subcellular location is the cell membrane. It is found in the cytoplasm. Its function is as follows. Essential sporozoite protein. In the mosquito vector, required for sporozoite development in the oocyst, migration through the vector hemolymph and entry into the vector salivary glands. In the vertebrate host, required for sporozoite migration through the host dermis and infection of host hepatocytes. Binds to highly sulfated heparan sulfate proteoglycans (HSPGs) on the surface of host hepatocytes. In the vertebrate host, binds to highly sulfated heparan sulfate proteoglycans (HSPGs) on the surface of host hepatocytes and is required for sporozoite invasion of the host hepatocytes. This Plasmodium vivax (strain Salvador I) protein is Circumsporozoite protein.